Here is a 338-residue protein sequence, read N- to C-terminus: MKVFYDKDADLSLIKGKNVTIIGYGSQGHAHALNLNDSGVKVTVGLRKNGASWNKAVNAGLQVKEVAEAVKEADVVMILLPDEQIADVYKNEVHGNIKQGAALAFAHGFNVHYGAVIPRADLDVIMIAPKAPGHTVRGTYTQGGGVPHLIAVHQDKSGAARDIALSYATANGGGRAGIIETNFREETETDLFGEQAVLCGGTVELIKAGFETLVEAGYAPEMAYFECLHELKLIVDLIYEGGIANMNYSISNNAEYGEYVTGPRVVTEETKKAMKQCLKDIQTGEYAKSFLLEYKAGQPTLISRRRLTEEHQIEQVGAKLRAMMPWIAKNKLVDQTKN.

One can recognise a KARI N-terminal Rossmann domain in the interval 1 to 181 (MKVFYDKDAD…GGGRAGIIET (181 aa)). NADP(+) contacts are provided by residues 24–27 (YGSQ), Arg47, and Ser52. Residue His107 is part of the active site. Gly133 lines the NADP(+) pocket. In terms of domain architecture, KARI C-terminal knotted spans 182 to 327 (NFREETETDL…AKLRAMMPWI (146 aa)). Mg(2+) contacts are provided by Asp190, Glu194, Glu226, and Glu230. Substrate is bound at residue Ser251.

Belongs to the ketol-acid reductoisomerase family. Mg(2+) is required as a cofactor.

The catalysed reaction is (2R)-2,3-dihydroxy-3-methylbutanoate + NADP(+) = (2S)-2-acetolactate + NADPH + H(+). The enzyme catalyses (2R,3R)-2,3-dihydroxy-3-methylpentanoate + NADP(+) = (S)-2-ethyl-2-hydroxy-3-oxobutanoate + NADPH + H(+). Its pathway is amino-acid biosynthesis; L-isoleucine biosynthesis; L-isoleucine from 2-oxobutanoate: step 2/4. It participates in amino-acid biosynthesis; L-valine biosynthesis; L-valine from pyruvate: step 2/4. Its function is as follows. Involved in the biosynthesis of branched-chain amino acids (BCAA). Catalyzes an alkyl-migration followed by a ketol-acid reduction of (S)-2-acetolactate (S2AL) to yield (R)-2,3-dihydroxy-isovalerate. In the isomerase reaction, S2AL is rearranged via a Mg-dependent methyl migration to produce 3-hydroxy-3-methyl-2-ketobutyrate (HMKB). In the reductase reaction, this 2-ketoacid undergoes a metal-dependent reduction by NADPH to yield (R)-2,3-dihydroxy-isovalerate. The sequence is that of Ketol-acid reductoisomerase (NADP(+)) from Ralstonia pickettii (strain 12J).